We begin with the raw amino-acid sequence, 202 residues long: Dephospho-CoA kinase (202 aa).

One can recognise a DPCK domain in the interval 6–202 (KISVTGDPSS…QCFKALKGTI (197 aa)). ATP is bound at residue 14 to 19 (SSGKTE).

Belongs to the CoaE family.

It is found in the cytoplasm. It carries out the reaction 3'-dephospho-CoA + ATP = ADP + CoA + H(+). The protein operates within cofactor biosynthesis; coenzyme A biosynthesis; CoA from (R)-pantothenate: step 5/5. Its function is as follows. Catalyzes the phosphorylation of the 3'-hydroxyl group of dephosphocoenzyme A to form coenzyme A. This Chlamydia trachomatis serovar A (strain ATCC VR-571B / DSM 19440 / HAR-13) protein is Dephospho-CoA kinase.